We begin with the raw amino-acid sequence, 555 residues long: Coiled-coil domain-containing protein 102A (555 aa).

3 disordered regions span residues Met1–Asp68, Leu136–Glu202, and Pro214–Ala254. A phosphoserine mark is found at Ser12, Ser26, and Ser28. Over residues Ser37–Pro61 the composition is skewed to pro residues. Residues Arg72–Arg161 adopt a coiled-coil conformation. Composition is skewed to basic and acidic residues over residues Leu136–Arg159 and Gly166–Glu183. Low complexity predominate over residues Arg224 to Gly236. Coiled coils occupy residues Gln268–Thr401 and Lys432–Pro522. The interval Glu478–Ala555 is disordered. The span at Glu536–Ala555 shows a compositional bias: acidic residues. Ser542 is modified (phosphoserine).

This chain is Coiled-coil domain-containing protein 102A (CCDC102A), found in Bos taurus (Bovine).